The following is a 216-amino-acid chain: Pyridoxine/pyridoxamine 5'-phosphate oxidase (216 aa).

Substrate-binding positions include 12 to 15 and K70; that span reads RKSY. Residues 65-70, 80-81, R86, and K87 contribute to the FMN site; these read RVVLVK and FT. Y127, R131, and S135 together coordinate substrate. FMN is bound by residues 144 to 145 and W188; that span reads QS. Residue 194-196 coordinates substrate; it reads RLH. FMN is bound at residue R198.

Belongs to the pyridoxamine 5'-phosphate oxidase family. In terms of assembly, homodimer. It depends on FMN as a cofactor.

It carries out the reaction pyridoxamine 5'-phosphate + O2 + H2O = pyridoxal 5'-phosphate + H2O2 + NH4(+). The enzyme catalyses pyridoxine 5'-phosphate + O2 = pyridoxal 5'-phosphate + H2O2. It participates in cofactor metabolism; pyridoxal 5'-phosphate salvage; pyridoxal 5'-phosphate from pyridoxamine 5'-phosphate: step 1/1. The protein operates within cofactor metabolism; pyridoxal 5'-phosphate salvage; pyridoxal 5'-phosphate from pyridoxine 5'-phosphate: step 1/1. Functionally, catalyzes the oxidation of either pyridoxine 5'-phosphate (PNP) or pyridoxamine 5'-phosphate (PMP) into pyridoxal 5'-phosphate (PLP). In Polaromonas sp. (strain JS666 / ATCC BAA-500), this protein is Pyridoxine/pyridoxamine 5'-phosphate oxidase.